Reading from the N-terminus, the 500-residue chain is MNYFPWLTIIVVFPISAGSLMLFLPYRGNKVNKWYTICICILELLITTYAFCYNFKMDDPLIQLSEDYKWINFLDFYWRLGIDGLSIGTILLTGFITTLATLAAFPVTRDSRLFHFLMLAMYSGQIGSFSSRDLLLFFIMWELELIPVYLLLSMWGGKKRLYSATKFILYTAGSSIFLLIGVLGISLYGSNEPTLNLELLANQSYPVTLEIILYIGFLIAFAVKSPLIPLHTWLPDTHGEAHYSTCMLLAGILLKMGAYGLVRINMELLPHAHSLFSPWLMVVGTIQIIYAASTSPGQRNLKKRIAYSSVSHMGFIIIGIASITDPGLNGAILQIISHGFIGAALFFLAGTSYDRIRLVSLDEMGGMAISIPKIFTMFTILSMASLALPGMSGFVAEFIVFFGIITSQKYLLMAKIFIIVVMAIGMILTPIYLLSMSRQMFYGYKLINVQNFSFFDSGPRELFLSISSLLPIIGMGIYPDFVLSLASNKVESILSNYFYG.

14 helical membrane passes run 4 to 24 (FPWL…MLFL), 35 to 55 (YTIC…CYNF), 87 to 107 (IGTI…AFPV), 113 to 130 (LFHF…GSFS), 134 to 154 (LLLF…LLSM), 167 to 187 (FILY…GISL), 211 to 231 (IILY…IPLH), 242 to 262 (HYST…YGLV), 272 to 292 (AHSL…IYAA), 305 to 325 (IAYS…SITD), 330 to 350 (GAIL…FLAG), 386 to 406 (LALP…GIIT), 416 to 436 (IFII…LLSM), and 462 to 482 (LFLS…PDFV).

This sequence belongs to the complex I subunit 4 family.

The protein localises to the plastid. It localises to the chloroplast thylakoid membrane. The enzyme catalyses a plastoquinone + NADH + (n+1) H(+)(in) = a plastoquinol + NAD(+) + n H(+)(out). The catalysed reaction is a plastoquinone + NADPH + (n+1) H(+)(in) = a plastoquinol + NADP(+) + n H(+)(out). In Aethionema cordifolium (Lebanon stonecress), this protein is NAD(P)H-quinone oxidoreductase chain 4, chloroplastic.